The following is a 327-amino-acid chain: dTDP-4-dehydrorhamnose reductase (327 aa).

A disordered region spans residues 1-22 (MDLINGMGTSPGYWRTPREPGN). Residues 43-45 (GMV), 69-70 (DI), and 91-93 (AYT) each bind NADH. NADPH is bound by residues 44–45 (MV), 69–70 (DI), and 91–93 (AYT). Position 132-133 (132-133 (TD)) interacts with dTDP-beta-L-rhamnose. NADH is bound by residues Y157 and K161. NADPH is bound by residues Y157 and K161. Residue Y157 is the Proton donor/acceptor of the active site. W182 contributes to the dTDP-beta-L-rhamnose binding site. Residues 264–276 (PERVRPCGSDRHP) are compositionally biased toward basic and acidic residues. Residues 264-292 (PERVRPCGSDRHPRPAPRPSYTVLSSQRS) are disordered.

It belongs to the dTDP-4-dehydrorhamnose reductase family. The cofactor is Mg(2+).

It carries out the reaction dTDP-beta-L-rhamnose + NADP(+) = dTDP-4-dehydro-beta-L-rhamnose + NADPH + H(+). Its pathway is carbohydrate biosynthesis; dTDP-L-rhamnose biosynthesis. In terms of biological role, involved in the biosynthesis of the dTDP-L-rhamnose which is a component of the critical linker, D-N-acetylglucosamine-L-rhamnose disaccharide, which connects the galactan region of arabinogalactan to peptidoglycan via a phosphodiester linkage. Catalyzes the reduction of dTDP-6-deoxy-L-lyxo-4-hexulose to yield dTDP-L-rhamnose. In Mycolicibacterium smegmatis (strain ATCC 700084 / mc(2)155) (Mycobacterium smegmatis), this protein is dTDP-4-dehydrorhamnose reductase.